We begin with the raw amino-acid sequence, 498 residues long: Ulvan-active sulfatase (498 aa).

The signal sequence occupies residues 1 to 22 (MNSKKTGVIILGCIAFLHIACS). Ca(2+) is bound by residues Asp-55, Asp-56, Cys-95, Asp-266, and His-267. Cys-95 (nucleophile) is an active-site residue. A 3-oxoalanine (Cys) modification is found at Cys-95.

The protein belongs to the sulfatase family. Ca(2+) is required as a cofactor. In terms of processing, the conversion to 3-oxoalanine (also known as C-formylglycine, FGly), of a serine or cysteine residue in prokaryotes and of a cysteine residue in eukaryotes, is critical for catalytic activity. This post-translational modification is severely defective in multiple sulfatase deficiency (MSD).

It localises to the periplasm. Functionally, sulfatase involved in ulvan degradation. Ulvan is the main polysaccharide component of the Ulvales (green seaweed) cell wall. It is composed of disaccharide building blocks comprising 3-sulfated rhamnose (Rha3S) linked to D-glucuronic acid (GlcA), L-iduronic acid (IduA), or D-xylose (Xyl). This Formosa agariphila (strain DSM 15362 / KCTC 12365 / LMG 23005 / KMM 3901 / M-2Alg 35-1) protein is Ulvan-active sulfatase.